The sequence spans 407 residues: Phosphopentomutase (407 aa).

Mn(2+) contacts are provided by aspartate 10, aspartate 306, histidine 311, aspartate 347, histidine 348, and histidine 359.

This sequence belongs to the phosphopentomutase family. It depends on Mn(2+) as a cofactor.

The protein resides in the cytoplasm. The catalysed reaction is 2-deoxy-alpha-D-ribose 1-phosphate = 2-deoxy-D-ribose 5-phosphate. The enzyme catalyses alpha-D-ribose 1-phosphate = D-ribose 5-phosphate. It participates in carbohydrate degradation; 2-deoxy-D-ribose 1-phosphate degradation; D-glyceraldehyde 3-phosphate and acetaldehyde from 2-deoxy-alpha-D-ribose 1-phosphate: step 1/2. Isomerase that catalyzes the conversion of deoxy-ribose 1-phosphate (dRib-1-P) and ribose 1-phosphate (Rib-1-P) to deoxy-ribose 5-phosphate (dRib-5-P) and ribose 5-phosphate (Rib-5-P), respectively. This Salmonella dublin (strain CT_02021853) protein is Phosphopentomutase.